Reading from the N-terminus, the 466-residue chain is MVFLSGNASDSSNCTQPPAPVNIPKAILLGVILGVLILFGVPGNILVILSVACHRHLHSVTHYYIVNLAVADLLLTSTVLPFSAIFEILGYWAFGRVFCNIWAAVDVLCCTASIMSLCIISIDRYIGVSYPLRYPTIVTQRRGLRALLCLWALSLVISIGPLFGWRQPAPQDETICQINEDPSYVLFSALGSFYVPLAIILVMYCRVYVVAKRESRGLTSGLKTDKSDSEQVTLRIHRKNAPLGGSGVASSKNKTHFSVRLLKFSREKKAAKTLGIVVGCFVLCWLPFFLVMPIGSFFPDFKPSETVFKIVFWLGYLNSCINPIIYPCSSQEFKKAFQNVLKIQCLRRKQSSKHALGYTLHPPSQAVEGQHKDMVRIPVGSRETFYKISKTDGVCEWKFFSSMPRGSARITVPKDQSACTTARVRSKSFLQVCCCVGPSTPNPGENHQVPTIKIHTISLSENGEEV.

The Extracellular segment spans residues 1 to 25 (MVFLSGNASDSSNCTQPPAPVNIPK). N-linked (GlcNAc...) asparagine glycans are attached at residues Asn7 and Asn13. Residues 26-51 (AILLGVILGVLILFGVPGNILVILSV) traverse the membrane as a helical segment. The Cytoplasmic portion of the chain corresponds to 52 to 63 (ACHRHLHSVTHY). The helical transmembrane segment at 64 to 89 (YIVNLAVADLLLTSTVLPFSAIFEIL) threads the bilayer. At 90 to 99 (GYWAFGRVFC) the chain is on the extracellular side. The chain crosses the membrane as a helical span at residues 100 to 122 (NIWAAVDVLCCTASIMSLCIISI). Over 123–143 (DRYIGVSYPLRYPTIVTQRRG) the chain is Cytoplasmic. A helical transmembrane segment spans residues 144–168 (LRALLCLWALSLVISIGPLFGWRQP). At 169-181 (APQDETICQINED) the chain is on the extracellular side. The helical transmembrane segment at 182 to 205 (PSYVLFSALGSFYVPLAIILVMYC) threads the bilayer. Over 206-272 (RVYVVAKRES…KFSREKKAAK (67 aa)) the chain is Cytoplasmic. Residues 273 to 297 (TLGIVVGCFVLCWLPFFLVMPIGSF) traverse the membrane as a helical segment. The Extracellular portion of the chain corresponds to 298 to 304 (FPDFKPS). A helical membrane pass occupies residues 305–329 (ETVFKIVFWLGYLNSCINPIIYPCS). The Cytoplasmic portion of the chain corresponds to 330 to 466 (SQEFKKAFQN…ISLSENGEEV (137 aa)). A Nuclear localization signal motif is present at residues 334–349 (KKAFQNVLKIQCLRRK). Cys345 carries the S-palmitoyl cysteine lipid modification.

It belongs to the G-protein coupled receptor 1 family. Adrenergic receptor subfamily. ADRA1A sub-subfamily. As to quaternary structure, homo- and heterooligomer. Heterooligomerizes with ADRA1B homooligomers in cardiac myocytes. Interacts with CAVIN4.

Its subcellular location is the nucleus membrane. It localises to the cell membrane. The protein resides in the cytoplasm. The protein localises to the membrane. It is found in the caveola. In terms of biological role, this alpha-adrenergic receptor mediates its action by association with G proteins that activate a phosphatidylinositol-calcium second messenger system. Its effect is mediated by G(q) and G(11) proteins. Nuclear ADRA1A-ADRA1B heterooligomers regulate phenylephrine (PE)-stimulated ERK signaling in cardiac myocytes. This chain is Alpha-1A adrenergic receptor (ADRA1A), found in Cavia porcellus (Guinea pig).